Consider the following 362-residue polypeptide: Peptide chain release factor 1 (362 aa).

An N5-methylglutamine modification is found at Gln237.

This sequence belongs to the prokaryotic/mitochondrial release factor family. In terms of processing, methylated by PrmC. Methylation increases the termination efficiency of RF1.

The protein localises to the cytoplasm. Functionally, peptide chain release factor 1 directs the termination of translation in response to the peptide chain termination codons UAG and UAA. In Marinomonas sp. (strain MWYL1), this protein is Peptide chain release factor 1.